A 402-amino-acid chain; its full sequence is mRNA-capping enzyme subunit alpha (402 aa).

Catalysis depends on K66, which acts as the N6-GMP-lysine intermediate.

Belongs to the eukaryotic GTase family. As to quaternary structure, heterodimer. The mRNA-capping enzyme is composed of two separate chains alpha and beta, respectively a mRNA guanylyltransferase and an mRNA 5'-triphosphate monophosphatase.

The protein resides in the nucleus. The catalysed reaction is a 5'-end diphospho-ribonucleoside in mRNA + GTP + H(+) = a 5'-end (5'-triphosphoguanosine)-ribonucleoside in mRNA + diphosphate. Second step of mRNA capping. Transfer of the GMP moiety of GTP to the 5'-end of RNA via an enzyme-GMP covalent reaction intermediate. The chain is mRNA-capping enzyme subunit alpha (rnp-2) from Neurospora crassa (strain ATCC 24698 / 74-OR23-1A / CBS 708.71 / DSM 1257 / FGSC 987).